We begin with the raw amino-acid sequence, 1460 residues long: MAGRPLRIGDQLVLEEDYDETYIPSEQEILEFAREIGIDPIKEPELMWLAREGIVAPLPGEWKPCQDITGDIYYFNFANGQSMWDHPCDEHYRSLVIQERAKLSTSGAIKKKKKKKEKKDKKDRDPPKSSLALGSSLAPVHVPLGGLAPLRGLVDTPPSALRGSQSVSLGSSVESGRQLGELMLPSQGLKTSAYTKGLLGSIYEDKTALSLLGLGEETNEEDEEESDNQSVHSSSEPLRNLHLDIGALGGDFEYEESLRTSQPEEKKDVSLDSDAAGPPTPCKPSSPGADSSLSSAVGKGRQGSGARPGLPEKEENEKSEPKICRNLVTPKADPTGSEPAKASEKEAPEDTVDAGEEGSRREEAAKEPKKKASALEEGSSDASQELEISEHMKEPQLSDSIASDPKSFHGLDFGFRSRISEHLLDVDVLSPVLGGACRQAQQPLGIEDKDDSQSSQDELQSKQSKGLEERLSPPLPHEERAQSPPRSLATEEEPPQGPEGQPEWKEAEELGEDSAASLSLQLSLQREQAPSPPAACEKGKEQHSQAEELGPGQEEAEDPEEKVAVSPTPPVSPEVRSTEPVAPPEQLSEAALKAMEEAVAQVLEQDQRHLLESKQEKMQQLREKLCQEEEEEILRLHQQKEQSLSSLRERLQKAIEEEEARMREEESQRLSWLRAQVQSSTQADEDQIRAEQEASLQKLREELESQQKAERASLEQKNRQMLEQLKEEIEASEKSEQAALNAAKEKALQQLREQLEGERKEAVATLEKEHSAELERLCSSLEAKHREVVSSLQKKIQEAQQKEEAQLQKCLGQVEHRVHQKSYHVAGYEHELSSLLREKRQEVEGEHERRLDKMKEEHQQVMAKAREQYEAEERKQRAELLGHLTGELERLQRAHERELETVRQEQHKRLEDLRRRHREQERKLQDLELDLETRAKDVKARLALLEVQEETARREKQQLLDVQRQVALKSEEATATHQQLEEAQKEHTHLLQSNQQLREILDELQARKLKLESQVDLLQAQSQQLQKHFSSLEAEAQKKQHLLREVTVEENNASPHFEPDLHIEDLRKSLGTNQTKEVSSSLSQSKEDLYLDSLSSHNVWHLLSAEGVALRSAKEFLVQQTRSMRRRQTALKAAQQHWRHELASAQEVAKDPPGIKALEDMRKNLEKETRHLDEMKSAMRKGHNLLKKKEEKLNQLESSLWEEASDEGTLGGSPTKKAVTFDLSDMDSLSSESSESFSPPHREWWRQQRIDSTPSLTSRKIHGLSHSLRQISSQLSSVLSILDSLNPQSPPPLLASMPAQLPPRDPKSTPTPTYYGSLARFSALSSATPTSTQWAWDSGQGPRLPSSVAQTVDDFLLEKWRKYFPSGIPLLSNSPTPLESRLGYMSASEQLRLLQHSHSQVPEAGSTTFQGIIEANRRWLERVKNDPRLPLFSSTPKPKATLSLLQLGLDEHNRVKVYRF.

Residues 1 to 194 form an interaction with ATRIP region; sequence MAGRPLRIGD…PSQGLKTSAY (194 aa). Residues 56-89 enclose the WW domain; sequence APLPGEWKPCQDITGDIYYFNFANGQSMWDHPCD. The tract at residues 107 to 135 is disordered; it reads GAIKKKKKKKEKKDKKDRDPPKSSLALGS. Residues 109–119 show a composition bias toward basic residues; the sequence is IKKKKKKKEKK. Ser-186 carries the phosphoserine; by ATR and ATM modification. Ser-201 carries the phosphoserine modification. Disordered stretches follow at residues 213 to 412, 440 to 593, and 658 to 719; these read GLGE…HGLD, AQQP…AALK, and EEAR…QKNR. The segment covering 217–227 has biased composition (acidic residues); sequence ETNEEDEEESD. Residues 256–270 are compositionally biased toward basic and acidic residues; it reads ESLRTSQPEEKKDVS. The segment covering 285-296 has biased composition (low complexity); that stretch reads SSPGADSSLSSA. Basic and acidic residues-rich tracts occupy residues 310-323 and 357-367; these read LPEKEENEKSEPKI and EGSRREEAAKE. Residues 453–464 show a composition bias toward low complexity; it reads QSSQDELQSKQS. A compositionally biased stretch (basic and acidic residues) spans 465–481; that stretch reads KGLEERLSPPLPHEERA. Over residues 514-525 the composition is skewed to low complexity; it reads SAASLSLQLSLQ. A compositionally biased stretch (basic and acidic residues) spans 537 to 546; sequence EKGKEQHSQA. Ser-566 bears the Phosphoserine mark. Basic and acidic residues-rich tracts occupy residues 658–668 and 686–719; these read EEARMREEESQ and DQIRAEQEASLQKLREELESQQKAERASLEQKNR. Residues 1154–1206 are a coiled coil; sequence GIKALEDMRKNLEKETRHLDEMKSAMRKGHNLLKKKEEKLNQLESSLWEEASD. Residues 1290–1310 form a disordered region; it reads PPPLLASMPAQLPPRDPKSTP. Phosphoserine is present on residues Ser-1386, Ser-1388, and Ser-1443.

In terms of assembly, interacts (via N-terminus) with ATRIP. Interacts with ATM, ATR and MDC1. Interacts with XPA (via N-terminus) upon UV irradiation. Interacts with CEP83, CCDC92, TTBK2, DVL3, NPHP3 and weakly with NPHP4. Interacts with DZIP1. In terms of processing, phosphorylation at Ser-186 is induced upon DNA-damage caused by treatment with IR irradiation, UV irradiation, hydroxyurea or amphidicolin. Also MDC1-mediated chromatin remodeling is critical for DNA damage-induced phosphorylation. As to expression, expressed in several cell lines.

Its subcellular location is the cytoplasm. It localises to the cytoskeleton. The protein localises to the microtubule organizing center. The protein resides in the centrosome. It is found in the centriole. Its subcellular location is the nucleus. Its function is as follows. Plays a role in microtubule organization and/or maintenance for the formation of primary cilia (PC), a microtubule-based structure that protrudes from the surface of epithelial cells. Plays a critical role in G2/M checkpoint and nuclear divisions. A key player in the DNA damage-activated ATR/ATM signaling cascade since it is required for the proper phosphorylation of H2AX, RPA, CHEK2 and CHEK1. Plays a critical role in chromosome segregation, acting as a mediator required for the maintenance of genomic stability through modulation of MDC1, RPA and CHEK1. The chain is Centrosomal protein of 164 kDa (CEP164) from Homo sapiens (Human).